An 82-amino-acid polypeptide reads, in one-letter code: Putative membrane protein insertion efficiency factor (82 aa).

It belongs to the UPF0161 family.

Its subcellular location is the cell inner membrane. In terms of biological role, could be involved in insertion of integral membrane proteins into the membrane. This chain is Putative membrane protein insertion efficiency factor, found in Francisella tularensis subsp. novicida (strain U112).